Here is a 274-residue protein sequence, read N- to C-terminus: 4-hydroxy-3-methylbut-2-enyl diphosphate reductase (274 aa).

C12 serves as a coordination point for [4Fe-4S] cluster. The (2E)-4-hydroxy-3-methylbut-2-enyl diphosphate site is built by H36 and H70. The dimethylallyl diphosphate site is built by H36 and H70. Residues H36 and H70 each coordinate isopentenyl diphosphate. Residue C92 coordinates [4Fe-4S] cluster. H120 is a binding site for (2E)-4-hydroxy-3-methylbut-2-enyl diphosphate. Residue H120 participates in dimethylallyl diphosphate binding. H120 lines the isopentenyl diphosphate pocket. The active-site Proton donor is E122. T158 serves as a coordination point for (2E)-4-hydroxy-3-methylbut-2-enyl diphosphate. Position 186 (C186) interacts with [4Fe-4S] cluster. The (2E)-4-hydroxy-3-methylbut-2-enyl diphosphate site is built by S214, S215, N216, and S258. S214, S215, N216, and S258 together coordinate dimethylallyl diphosphate. Isopentenyl diphosphate is bound by residues S214, S215, N216, and S258.

The protein belongs to the IspH family. Requires [4Fe-4S] cluster as cofactor.

It carries out the reaction isopentenyl diphosphate + 2 oxidized [2Fe-2S]-[ferredoxin] + H2O = (2E)-4-hydroxy-3-methylbut-2-enyl diphosphate + 2 reduced [2Fe-2S]-[ferredoxin] + 2 H(+). The catalysed reaction is dimethylallyl diphosphate + 2 oxidized [2Fe-2S]-[ferredoxin] + H2O = (2E)-4-hydroxy-3-methylbut-2-enyl diphosphate + 2 reduced [2Fe-2S]-[ferredoxin] + 2 H(+). It participates in isoprenoid biosynthesis; dimethylallyl diphosphate biosynthesis; dimethylallyl diphosphate from (2E)-4-hydroxy-3-methylbutenyl diphosphate: step 1/1. It functions in the pathway isoprenoid biosynthesis; isopentenyl diphosphate biosynthesis via DXP pathway; isopentenyl diphosphate from 1-deoxy-D-xylulose 5-phosphate: step 6/6. Its function is as follows. Catalyzes the conversion of 1-hydroxy-2-methyl-2-(E)-butenyl 4-diphosphate (HMBPP) into a mixture of isopentenyl diphosphate (IPP) and dimethylallyl diphosphate (DMAPP). Acts in the terminal step of the DOXP/MEP pathway for isoprenoid precursor biosynthesis. The sequence is that of 4-hydroxy-3-methylbut-2-enyl diphosphate reductase from Helicobacter pylori (strain Shi470).